Consider the following 79-residue polypeptide: MSGLGIMVLTLLLLVFMATSHQDAGEKQATQRDAVNVRRRRSIAGRTTTEECDEYCEDLNKNCCGLSNGEPVCATACLG.

The signal sequence occupies residues M1–A24. A propeptide spanning residues G25–R46 is cleaved from the precursor. Cystine bridges form between C52/C64, C56/C73, and C63/C77. L78 bears the Leucine amide mark.

It belongs to the conotoxin O3 superfamily. Expressed by the venom duct.

The protein localises to the secreted. The polypeptide is Conotoxin TsMSGL-2 (Conus tessulatus (Tessellate cone)).